A 203-amino-acid polypeptide reads, in one-letter code: Glycerol-3-phosphate acyltransferase (203 aa).

5 helical membrane passes run 2-22 (LATLMFILAYLLGSISSAILV), 54-74 (CLVLIFDVLKGTIPVWGAYFL), 80-100 (ALGLVAVAACLGHMFPLFFGF), 114-134 (LPIGLSLAGLLICTWFIMVAI), and 153-173 (TWLIKPLYTLPVTFITVLIIF).

This sequence belongs to the PlsY family. Probably interacts with PlsX.

Its subcellular location is the cell inner membrane. The catalysed reaction is an acyl phosphate + sn-glycerol 3-phosphate = a 1-acyl-sn-glycero-3-phosphate + phosphate. Its pathway is lipid metabolism; phospholipid metabolism. Functionally, catalyzes the transfer of an acyl group from acyl-phosphate (acyl-PO(4)) to glycerol-3-phosphate (G3P) to form lysophosphatidic acid (LPA). This enzyme utilizes acyl-phosphate as fatty acyl donor, but not acyl-CoA or acyl-ACP. This chain is Glycerol-3-phosphate acyltransferase, found in Pseudoalteromonas translucida (strain TAC 125).